The chain runs to 690 residues: Wilms tumor protein 1-interacting protein homolog (690 aa).

2 disordered regions span residues 151 to 316 and 328 to 372; these read MSAT…VSPR and TLGS…PRSS. Low complexity predominate over residues 152–186; it reads SATSPRSSMASSASSSQEHSKYSSPRSSISSNALS. Composition is skewed to polar residues over residues 204 to 214, 223 to 233, 240 to 261, and 272 to 292; these read EKYTSPRSSLG, PRSSYASTTSD, PRAS…TSGI, and PRSS…SYSD. Low complexity predominate over residues 335–357; it reads SVVSPRSSISSHSSRSSRSSRGS. LIM zinc-binding domains follow at residues 479–540, 544–603, and 604–673; these read GICI…SGFQ, DKCF…TVFA, and PKCA…RLSV.

The protein belongs to the zyxin/ajuba family. Interacts with prickle3.

Its subcellular location is the cell junction. It localises to the adherens junction. The protein resides in the nucleus. In terms of biological role, may monitor slit diaphragm protein assembly, a specialized adherens junction characteristic of podocytes. In case of podocyte injury, it shuttles into the nucleus and acts as a transcription regulator. Plays a role in the regulation of cell morphology and cytoskeletal organization. Acts as a transcriptional corepressor for snai1 and snai2/slug and plays a role in regulating neural crest development. Involved in the organization of the basal body. Involved in cilia growth and positioning. In Xenopus laevis (African clawed frog), this protein is Wilms tumor protein 1-interacting protein homolog (wtip).